A 607-amino-acid chain; its full sequence is UvrABC system protein C (607 aa).

The GIY-YIG domain occupies 16 to 94 (GRPGVYRMFD…IKEWRPPYNI (79 aa)). Residues 203–238 (NALSDELNATMEKAAMALDFERAAELRDQVALLRRV) enclose the UVR domain.

This sequence belongs to the UvrC family. In terms of assembly, interacts with UvrB in an incision complex.

The protein resides in the cytoplasm. Functionally, the UvrABC repair system catalyzes the recognition and processing of DNA lesions. UvrC both incises the 5' and 3' sides of the lesion. The N-terminal half is responsible for the 3' incision and the C-terminal half is responsible for the 5' incision. The sequence is that of UvrABC system protein C from Pseudomonas savastanoi pv. phaseolicola (strain 1448A / Race 6) (Pseudomonas syringae pv. phaseolicola (strain 1448A / Race 6)).